We begin with the raw amino-acid sequence, 108 residues long: Transmembrane protein 265 (108 aa).

2 consecutive transmembrane segments (helical) span residues 34–54 (AATS…VFAI) and 78–98 (LILA…LLLW).

The protein belongs to the CD225/Dispanin family.

It localises to the membrane. The sequence is that of Transmembrane protein 265 from Homo sapiens (Human).